The sequence spans 255 residues: Small ribosomal subunit protein eS4 (255 aa).

In terms of domain architecture, S4 RNA-binding spans 44-107 (IPLLILVRDV…DEYYRMIPYP (64 aa)).

It belongs to the eukaryotic ribosomal protein eS4 family.

This is Small ribosomal subunit protein eS4 from Ignicoccus hospitalis (strain KIN4/I / DSM 18386 / JCM 14125).